The primary structure comprises 149 residues: Calmodulin (149 aa).

Alanine 2 carries the post-translational modification N-acetylalanine. EF-hand domains follow at residues glutamate 8 to asparagine 43, proline 44 to aspartate 79, aspartate 81 to lysine 116, and leucine 117 to lysine 149. Positions 21, 23, 25, 27, 32, 57, 59, 61, 63, 68, 94, 96, 98, and 105 each coordinate Ca(2+). Residue lysine 116 is modified to N6,N6,N6-trimethyllysine. Aspartate 130, aspartate 132, aspartate 134, glutamine 136, and glutamate 141 together coordinate Ca(2+).

This sequence belongs to the calmodulin family.

Functionally, calmodulin mediates the control of a large number of enzymes, ion channels and other proteins by Ca(2+). Among the enzymes to be stimulated by the calmodulin-Ca(2+) complex are a number of protein kinases and phosphatases. The protein is Calmodulin of Renilla reniformis (Sea pansy).